Consider the following 915-residue polypeptide: Protein translocase subunit SecA (915 aa).

Residues Gln87, 105-109 (GEGKT), and Asp516 each bind ATP. Residues 866-915 (MTYGAPSDGDIGGSVEDEPLELPEGARVGRNDPCPCGSGKKYKQCHGKLS) are disordered. 4 residues coordinate Zn(2+): Cys899, Cys901, Cys910, and His911. A compositionally biased stretch (basic residues) spans 905–915 (KKYKQCHGKLS).

This sequence belongs to the SecA family. As to quaternary structure, monomer and homodimer. Part of the essential Sec protein translocation apparatus which comprises SecA, SecYEG and auxiliary proteins SecDF-YajC and YidC. Requires Zn(2+) as cofactor.

Its subcellular location is the cell inner membrane. It is found in the cytoplasm. It catalyses the reaction ATP + H2O + cellular proteinSide 1 = ADP + phosphate + cellular proteinSide 2.. Its function is as follows. Part of the Sec protein translocase complex. Interacts with the SecYEG preprotein conducting channel. Has a central role in coupling the hydrolysis of ATP to the transfer of proteins into and across the cell membrane, serving both as a receptor for the preprotein-SecB complex and as an ATP-driven molecular motor driving the stepwise translocation of polypeptide chains across the membrane. The chain is Protein translocase subunit SecA from Delftia acidovorans (strain DSM 14801 / SPH-1).